The following is a 339-amino-acid chain: Phosphate acyltransferase (339 aa).

This sequence belongs to the PlsX family. Homodimer. Probably interacts with PlsY.

It localises to the cytoplasm. The enzyme catalyses a fatty acyl-[ACP] + phosphate = an acyl phosphate + holo-[ACP]. Its pathway is lipid metabolism; phospholipid metabolism. Its function is as follows. Catalyzes the reversible formation of acyl-phosphate (acyl-PO(4)) from acyl-[acyl-carrier-protein] (acyl-ACP). This enzyme utilizes acyl-ACP as fatty acyl donor, but not acyl-CoA. The chain is Phosphate acyltransferase from Brachyspira hyodysenteriae (strain ATCC 49526 / WA1).